The following is a 250-amino-acid chain: tRNA (guanine-N(1)-)-methyltransferase (250 aa).

S-adenosyl-L-methionine is bound by residues Gly115 and 135–140 (LGDFVL).

This sequence belongs to the RNA methyltransferase TrmD family. In terms of assembly, homodimer.

It localises to the cytoplasm. The enzyme catalyses guanosine(37) in tRNA + S-adenosyl-L-methionine = N(1)-methylguanosine(37) in tRNA + S-adenosyl-L-homocysteine + H(+). Specifically methylates guanosine-37 in various tRNAs. The sequence is that of tRNA (guanine-N(1)-)-methyltransferase from Legionella pneumophila subsp. pneumophila (strain Philadelphia 1 / ATCC 33152 / DSM 7513).